Reading from the N-terminus, the 454-residue chain is Ribosomal protein uS12 methylthiotransferase RimO (454 aa).

The MTTase N-terminal domain occupies 14-125 (SKVAFSHVGC…IAKVLDRVEK (112 aa)). The [4Fe-4S] cluster site is built by Cys-23, Cys-59, Cys-88, Cys-163, Cys-167, and Cys-170. In terms of domain architecture, Radical SAM core spans 149-378 (DKNKFVAYLR…ISVQQNISKD (230 aa)). A TRAM domain is found at 381–452 (QSYVGSKMKI…EYDLYGETIK (72 aa)).

This sequence belongs to the methylthiotransferase family. RimO subfamily. [4Fe-4S] cluster is required as a cofactor.

It is found in the cytoplasm. The catalysed reaction is L-aspartate(89)-[ribosomal protein uS12]-hydrogen + (sulfur carrier)-SH + AH2 + 2 S-adenosyl-L-methionine = 3-methylsulfanyl-L-aspartate(89)-[ribosomal protein uS12]-hydrogen + (sulfur carrier)-H + 5'-deoxyadenosine + L-methionine + A + S-adenosyl-L-homocysteine + 2 H(+). Its function is as follows. Catalyzes the methylthiolation of an aspartic acid residue of ribosomal protein uS12. This chain is Ribosomal protein uS12 methylthiotransferase RimO, found in Prochlorococcus marinus (strain MIT 9312).